Here is a 450-residue protein sequence, read N- to C-terminus: Hyaluronidase-1 (450 aa).

The signal sequence occupies residues 1–35 (MRPFSLEVSLHLPWAMAAHLLPVCTLFLNLLSMTQ). 2 disulfide bridges follow: cysteine 58–cysteine 348 and cysteine 222–cysteine 236. An N-linked (GlcNAc...) asparagine glycan is attached at asparagine 85. The Proton donor role is filled by glutamate 146. 2 N-linked (GlcNAc...) asparagine glycosylation sites follow: asparagine 231 and asparagine 365. Cystine bridges form between cysteine 373–cysteine 384, cysteine 378–cysteine 433, and cysteine 435–cysteine 444. An N-linked (GlcNAc...) asparagine glycan is attached at asparagine 398. The EGF-like domain maps to 433-444 (CRCYRGWRGTRC).

This sequence belongs to the glycosyl hydrolase 56 family.

It localises to the secreted. Its subcellular location is the lysosome. The enzyme catalyses Random hydrolysis of (1-&gt;4)-linkages between N-acetyl-beta-D-glucosamine and D-glucuronate residues in hyaluronate.. Functionally, may have a role in promoting tumor progression. May block the TGFB1-enhanced cell growth. This is Hyaluronidase-1 (HYAL1) from Bos taurus (Bovine).